The primary structure comprises 209 residues: Potassium-transporting ATPase KdpC subunit (209 aa).

Residues 18–38 (MLAVFTLFGLGLAYSLVATGI) form a helical membrane-spanning segment.

It belongs to the KdpC family. In terms of assembly, the system is composed of three essential subunits: KdpA, KdpB and KdpC.

The protein localises to the cell inner membrane. Functionally, part of the high-affinity ATP-driven potassium transport (or Kdp) system, which catalyzes the hydrolysis of ATP coupled with the electrogenic transport of potassium into the cytoplasm. This subunit acts as a catalytic chaperone that increases the ATP-binding affinity of the ATP-hydrolyzing subunit KdpB by the formation of a transient KdpB/KdpC/ATP ternary complex. This chain is Potassium-transporting ATPase KdpC subunit, found in Xanthomonas oryzae pv. oryzae (strain MAFF 311018).